Here is a 115-residue protein sequence, read N- to C-terminus: Ribonuclease P protein component (115 aa).

It belongs to the RnpA family. Consists of a catalytic RNA component (M1 or rnpB) and a protein subunit.

It catalyses the reaction Endonucleolytic cleavage of RNA, removing 5'-extranucleotides from tRNA precursor.. In terms of biological role, RNaseP catalyzes the removal of the 5'-leader sequence from pre-tRNA to produce the mature 5'-terminus. It can also cleave other RNA substrates such as 4.5S RNA. The protein component plays an auxiliary but essential role in vivo by binding to the 5'-leader sequence and broadening the substrate specificity of the ribozyme. The protein is Ribonuclease P protein component of Bacillus cereus (strain AH187).